A 691-amino-acid polypeptide reads, in one-letter code: Competence protein ComA (691 aa).

A run of 6 helical transmembrane segments spans residues 183–203, 220–240, 280–300, 322–342, 347–367, and 396–416; these read HLVS…AWLA, WVLA…GFSV, LAVL…LIWA, VLSL…SPLV, IPWF…VPFA, and VAAA…LLLL.

The protein to B.subtilis ComEC, H.influenzae REC2, and E.coli YcaI.

It is found in the cell inner membrane. Essential for natural transformation. Could be a transporter involved in DNA uptake. The polypeptide is Competence protein ComA (comA) (Neisseria gonorrhoeae).